The following is a 73-amino-acid chain: Small ribosomal subunit protein bS18 (73 aa).

It belongs to the bacterial ribosomal protein bS18 family. In terms of assembly, part of the 30S ribosomal subunit. Forms a tight heterodimer with protein bS6.

Functionally, binds as a heterodimer with protein bS6 to the central domain of the 16S rRNA, where it helps stabilize the platform of the 30S subunit. This is Small ribosomal subunit protein bS18 from Prochlorococcus marinus subsp. pastoris (strain CCMP1986 / NIES-2087 / MED4).